The following is a 252-amino-acid chain: 3-dehydroquinate dehydratase (252 aa).

Residues Glu-46–Arg-48 and Arg-82 each bind 3-dehydroquinate. Catalysis depends on His-143, which acts as the Proton donor/acceptor. The active-site Schiff-base intermediate with substrate is Lys-170. Arg-212, Ser-231, and Gln-235 together coordinate 3-dehydroquinate.

It belongs to the type-I 3-dehydroquinase family. As to quaternary structure, homodimer.

It carries out the reaction 3-dehydroquinate = 3-dehydroshikimate + H2O. It participates in metabolic intermediate biosynthesis; chorismate biosynthesis; chorismate from D-erythrose 4-phosphate and phosphoenolpyruvate: step 3/7. Its function is as follows. Involved in the third step of the chorismate pathway, which leads to the biosynthesis of aromatic amino acids. Catalyzes the cis-dehydration of 3-dehydroquinate (DHQ) and introduces the first double bond of the aromatic ring to yield 3-dehydroshikimate. The protein is 3-dehydroquinate dehydratase of Listeria monocytogenes serovar 1/2a (strain ATCC BAA-679 / EGD-e).